The chain runs to 421 residues: Acylglycerol kinase, mitochondrial (421 aa).

K6 is subject to N6-acetyllysine. Residues 15–31 (TTAGLCLLTWGGHWLYG) are hydrophobic. A DAGKc domain is found at 58-199 (AQVKKATVFL…LDVLQIKGEK (142 aa)). The tract at residues 252–271 (ISYTGPRERPPIEPEETPPR) is disordered.

This sequence belongs to the AGK family. Component of the TIM22 complex, which core is composed of TIMM22, associated with TIMM10 (TIMM10A and/or TIMM10B), TIMM9, AGK and TIMM29. Interacts with SMIM26. Mg(2+) serves as cofactor. As to expression, ubiquitously expressed.

The protein resides in the mitochondrion inner membrane. The protein localises to the mitochondrion intermembrane space. The catalysed reaction is a monoacylglycerol + ATP = a monoacyl-sn-glycero-3-phosphate + ADP + H(+). It carries out the reaction a 1,2-diacyl-sn-glycerol + ATP = a 1,2-diacyl-sn-glycero-3-phosphate + ADP + H(+). It catalyses the reaction an N-acylsphing-4-enine + ATP = an N-acylsphing-4-enine 1-phosphate + ADP + H(+). The enzyme catalyses 1,2-di-(9Z-octadecenoyl)-sn-glycerol + ATP = 1,2-di-(9Z-octadecenoyl)-sn-glycero-3-phosphate + ADP + H(+). The catalysed reaction is 1-(9Z-octadecenoyl)-sn-glycerol + ATP = 1-(9Z-octadecenoyl)-sn-glycero-3-phosphate + ADP + H(+). It carries out the reaction 1-(5Z,8Z,11Z,14Z-eicosatetraenoyl)-sn-glycerol + ATP = 1-(5Z,8Z,11Z,14Z-eicosatetraenoyl)-sn-glycero-3-phosphate + ADP + H(+). It catalyses the reaction a 1-acyl-sn-glycerol + ATP = a 1-acyl-sn-glycero-3-phosphate + ADP + H(+). The enzyme catalyses 1-hexadecanoyl-sn-glycerol + ATP = 1-hexadecanoyl-sn-glycero-3-phosphate + ADP + H(+). The catalysed reaction is a 2-acylglycerol + ATP = a 2-acyl-sn-glycerol 3-phosphate + ADP + H(+). It carries out the reaction 2-(5Z,8Z,11Z,14Z-eicosatetraenoyl)-glycerol + ATP = 2-(5Z,8Z,11Z,14Z-eicosatetraenoyl)-sn-glycero-3-phosphate + ADP + H(+). It catalyses the reaction N-(hexanoyl)sphing-4-enine + ATP = N-hexanoylsphing-4-enine 1-phosphate + ADP + H(+). The protein operates within lipid metabolism; glycerolipid metabolism. With respect to regulation, both the ceramide and diacylglycerol kinase activities are inhibited by sphingosine and stimulated by cardiolipin. Both activities are stimulated by calcium when magnesium concentrations are low but inhibited by calcium when magnesium concentrations are high. In terms of biological role, lipid kinase that can phosphorylate both monoacylglycerol and diacylglycerol to form lysophosphatidic acid (LPA) and phosphatidic acid (PA), respectively. Phosphorylates ceramide but not sphingosine. Phosphorylates 1,2-dioleoylglycerol more rapidly than 2,3-dioleoylglycerol. Independently of its lipid kinase activity, acts as a component of the TIM22 complex. The TIM22 complex mediates the import and insertion of multi-pass transmembrane proteins into the mitochondrial inner membrane by forming a twin-pore translocase that uses the membrane potential as the external driving force. In the TIM22 complex, required for the import of a subset of metabolite carriers into mitochondria, such as ANT1/SLC25A4 and SLC25A24, while it is not required for the import of TIMM23. Overexpression increases the formation and secretion of LPA, resulting in transactivation of EGFR and activation of the downstream MAPK signaling pathway, leading to increased cell growth. In Mus musculus (Mouse), this protein is Acylglycerol kinase, mitochondrial.